The primary structure comprises 391 residues: MEPLRVLELYSGVGGMHHALRESCIPAQVVAAIDVNTVANEVYKYNFPHTQLLAKTIEGITLEEFDRLSFDMILMSPPCQPFTRIGRQGDMTDSRTNSFLHILDILPRLQKLPKYILLENVKGFEVSSTRDLLIQTIENCGFQYQEFLLSPTSLGIPNSRLRYFLIAKLQSEPLPFQAPGQVLMEFPKIESVHPQKYAMDVENKIQEKNVEPNISFDGSIQCSGKDAILFKLETAEEIHRKNQQDSDLSVKMLKDFLEDDTDVNQYLLPPKSLLRYALLLDIVQPTCRRSVCFTKGYGSYIEGTGSVLQTAEDVQVENIYKSLTNLSQEEQITKLLILKLRYFTPKEIANLLGFPPEFGFPEKITVKQRYRLLGNSLNVHVVAKLIKILYE.

The SAM-dependent MTase C5-type domain maps to 4-391; sequence LRVLELYSGV…VAKLIKILYE (388 aa). S-adenosyl-L-methionine contacts are provided by residues 13–15, D34, 57–58, and S76; these read VGG and IE. C79 is an active-site residue. S376 lines the S-adenosyl-L-methionine pocket.

Belongs to the class I-like SAM-binding methyltransferase superfamily. C5-methyltransferase family. In terms of tissue distribution, ubiquitous. Higher expression in testis, ovary and thymus and at much lower levels in spleen, prostate, colon, small intestine, and peripheral blood leukocytes.

It is found in the cytoplasm. It catalyses the reaction cytidine(38) in tRNA + S-adenosyl-L-methionine = 5-methylcytidine(38) in tRNA + S-adenosyl-L-homocysteine + H(+). Specifically methylates cytosine 38 in the anticodon loop of tRNA(Asp). Has higher activity on tRNA(Asp) modified with queuosine at position 34. The chain is tRNA (cytosine(38)-C(5))-methyltransferase (TRDMT1) from Homo sapiens (Human).